A 547-amino-acid polypeptide reads, in one-letter code: MSSAKLGSASEDVNRRDANYHPTVWGDFFLTHSSNFLENNDSILEKHEELKQEVRNLLVVETSDLPSKIQLTDEIIRLGVGYHFETEIKAQLEKLHDHQLHLNFDLLTTSVWFRLLRGHGFSISSDVFKRFKNTKGEFETEDARTLWCLYEATHLRVDGEDILEEAIQFSRKKLEALLPELSFPLNECVRDALHIPYHRNVQRLAARQYIPQYDAEPTKIESLSLFAKIDFNMLQALHQRELREASRWWKEFDFPSKLPYARDRIAEGYYWMMGAHFEPKFSLSRKFLNRIIGITSLIDDTYDVYGTLEEVTLFTEAVERWDIEAVKDIPKYMQVIYTGMLGIFEDFKDNLINARGKDYCIDYAIEVFKEIVRSYQREAEYFHTGYVPSYDEYMENSIISGGYKMFIILMLIGRGEFELKETLDWASTIPEMVEASSLIARYIDDLQTYKAEEERGETVSAVRCYMREFGVSEEQACKKMREMIEIEWKRLNKTTLEADEISSSVVIPSLNFTRVLEVMYDKGDGYSDSQGVTKDRIAALLRHAIEI.

D299, D303, and D444 together coordinate Mg(2+). Positions 299 to 303 (DDTYD) match the DDXXD motif motif.

It belongs to the terpene synthase family. Mg(2+) is required as a cofactor.

It catalyses the reaction (2E,6E)-farnesyl diphosphate = delta-guaiene + diphosphate. The catalysed reaction is (2E,6E)-farnesyl diphosphate = alpha-guaiene + diphosphate. It functions in the pathway secondary metabolite biosynthesis; terpenoid biosynthesis. Its function is as follows. Sesquiterpene synthase involved in the biosynthesis of delta-guaiene (81.2%) and alpha-guaiene (18.1%), two structures composed of five- and seven-membered rings. Also produces 0.7% of alpha-humulene. The polypeptide is Delta-guaiene synthase 1 (C2) (Aquilaria crassna (Eagle wood)).